A 232-amino-acid chain; its full sequence is 5'-methylthioadenosine/S-adenosylhomocysteine nucleosidase (232 aa).

Catalysis depends on E12, which acts as the Proton acceptor. Residues G78, I152, and M173 to E174 each bind substrate. D197 serves as the catalytic Proton donor.

This sequence belongs to the PNP/UDP phosphorylase family. MtnN subfamily. In terms of assembly, homodimer.

The enzyme catalyses S-adenosyl-L-homocysteine + H2O = S-(5-deoxy-D-ribos-5-yl)-L-homocysteine + adenine. It catalyses the reaction S-methyl-5'-thioadenosine + H2O = 5-(methylsulfanyl)-D-ribose + adenine. The catalysed reaction is 5'-deoxyadenosine + H2O = 5-deoxy-D-ribose + adenine. It functions in the pathway amino-acid biosynthesis; L-methionine biosynthesis via salvage pathway; S-methyl-5-thio-alpha-D-ribose 1-phosphate from S-methyl-5'-thioadenosine (hydrolase route): step 1/2. Functionally, catalyzes the irreversible cleavage of the glycosidic bond in both 5'-methylthioadenosine (MTA) and S-adenosylhomocysteine (SAH/AdoHcy) to adenine and the corresponding thioribose, 5'-methylthioribose and S-ribosylhomocysteine, respectively. Also cleaves 5'-deoxyadenosine, a toxic by-product of radical S-adenosylmethionine (SAM) enzymes, into 5-deoxyribose and adenine. Thus, is required for in vivo function of the radical SAM enzymes biotin synthase and lipoic acid synthase, that are inhibited by 5'-deoxyadenosine accumulation. This Escherichia fergusonii (strain ATCC 35469 / DSM 13698 / CCUG 18766 / IAM 14443 / JCM 21226 / LMG 7866 / NBRC 102419 / NCTC 12128 / CDC 0568-73) protein is 5'-methylthioadenosine/S-adenosylhomocysteine nucleosidase.